The primary structure comprises 213 residues: Nicolin-1 (213 aa).

Part of the neuronal tubulin polyglutamylase complex which contains TPGS1, TPGS2, TTLL1, LRRC49 and NICN1. In terms of tissue distribution, high expression level is found in brain, testis, liver and kidney. Weak expression in spleen, leukocytes, small intestine and colon.

The protein localises to the nucleus. The sequence is that of Nicolin-1 (NICN1) from Homo sapiens (Human).